The primary structure comprises 325 residues: Fructose-1,6-bisphosphatase class 1 (325 aa).

Mg(2+) is bound by residues Glu-84, Asp-103, Leu-105, and Asp-106. Residues 106–109 (DGSS), Asn-196, and Lys-262 each bind substrate. Position 268 (Glu-268) interacts with Mg(2+).

Belongs to the FBPase class 1 family. As to quaternary structure, homotetramer. Mg(2+) serves as cofactor.

It localises to the cytoplasm. The catalysed reaction is beta-D-fructose 1,6-bisphosphate + H2O = beta-D-fructose 6-phosphate + phosphate. The protein operates within carbohydrate biosynthesis; gluconeogenesis. This Shewanella baltica (strain OS195) protein is Fructose-1,6-bisphosphatase class 1.